A 283-amino-acid chain; its full sequence is Non-selective voltage-gated ion channel 1 (283 aa).

ATP is bound by residues arginine 11 and lysine 19. Serine 109 bears the Phosphoserine mark. Position 117 is a phosphothreonine (threonine 117).

The protein belongs to the eukaryotic mitochondrial porin family. As to quaternary structure, homodimer. Interacts with FCJ1. Interacts with AIM5. Interacts.

The protein resides in the mitochondrion outer membrane. In terms of biological role, non-selective voltage-gated ion channel that mediates the transport of anions and cations through the mitochondrion outer membrane. The channel adopts an open conformation at low or zero membrane potential and a closed conformation at potentials above 30-40 mV. The open state has a weak anion selectivity whereas the closed state is cation-selective. Is the major permeability factor of the mitochondrial outer membrane. Functionally, catalyzes the scrambling of phospholipids across the outer mitochondrial membrane; the mechanism is unrelated to channel activity and is capable of translocating both anionic and zwitterionic phospholipids. The protein is Non-selective voltage-gated ion channel 1 (POR1) of Saccharomyces cerevisiae (strain ATCC 204508 / S288c) (Baker's yeast).